The following is a 327-amino-acid chain: Aspartate--ammonia ligase (327 aa).

This sequence belongs to the class-II aminoacyl-tRNA synthetase family. AsnA subfamily.

Its subcellular location is the cytoplasm. It carries out the reaction L-aspartate + NH4(+) + ATP = L-asparagine + AMP + diphosphate + H(+). The protein operates within amino-acid biosynthesis; L-asparagine biosynthesis; L-asparagine from L-aspartate (ammonia route): step 1/1. This Bacillus mycoides (strain KBAB4) (Bacillus weihenstephanensis) protein is Aspartate--ammonia ligase.